Reading from the N-terminus, the 123-residue chain is Ribosome-binding factor A (123 aa).

This sequence belongs to the RbfA family. As to quaternary structure, monomer. Binds 30S ribosomal subunits, but not 50S ribosomal subunits or 70S ribosomes.

It is found in the cytoplasm. Its function is as follows. One of several proteins that assist in the late maturation steps of the functional core of the 30S ribosomal subunit. Associates with free 30S ribosomal subunits (but not with 30S subunits that are part of 70S ribosomes or polysomes). Required for efficient processing of 16S rRNA. May interact with the 5'-terminal helix region of 16S rRNA. The polypeptide is Ribosome-binding factor A (Neisseria gonorrhoeae (strain ATCC 700825 / FA 1090)).